The primary structure comprises 160 residues: Putative pre-16S rRNA nuclease (160 aa).

Belongs to the YqgF nuclease family.

It is found in the cytoplasm. In terms of biological role, could be a nuclease involved in processing of the 5'-end of pre-16S rRNA. This Jannaschia sp. (strain CCS1) protein is Putative pre-16S rRNA nuclease.